Reading from the N-terminus, the 116-residue chain is Large ribosomal subunit protein bL17 (116 aa).

The protein belongs to the bacterial ribosomal protein bL17 family. As to quaternary structure, part of the 50S ribosomal subunit. Contacts protein L32.

This chain is Large ribosomal subunit protein bL17, found in Helicobacter hepaticus (strain ATCC 51449 / 3B1).